The sequence spans 265 residues: MLMQSIYLSKIREQNPLIHNITNIVAANFSANGLLALGASPLMSANIEEMQEVPKISQVLVINIGTLIGKDREAMLQAGKTANEVGIPVVLDPVGVGATSYRRETIRQLLAEVKFALIRGNAGELAAIAGETWQAKGVDAGQGEVDLKAVAEKVAQRYGCTVLISGAVDIVSDGTQTATVHNGTSLFPKVTASGCLLSAVCAAFLAVSEGNYFSATLEACVAYTIAGECAAQGLTTQVGQFQIRLLDELAALSPETIGQRGRINE.

Methionine 43 is a substrate binding site. Residues arginine 119 and serine 165 each contribute to the ATP site. Substrate is bound at residue alanine 192.

This sequence belongs to the Thz kinase family. Mg(2+) is required as a cofactor.

The catalysed reaction is 5-(2-hydroxyethyl)-4-methylthiazole + ATP = 4-methyl-5-(2-phosphooxyethyl)-thiazole + ADP + H(+). Its pathway is cofactor biosynthesis; thiamine diphosphate biosynthesis; 4-methyl-5-(2-phosphoethyl)-thiazole from 5-(2-hydroxyethyl)-4-methylthiazole: step 1/1. Catalyzes the phosphorylation of the hydroxyl group of 4-methyl-5-beta-hydroxyethylthiazole (THZ). The sequence is that of Hydroxyethylthiazole kinase from Haemophilus influenzae (strain 86-028NP).